The chain runs to 183 residues: Cyanate hydratase (183 aa).

Catalysis depends on residues Arg118, Glu121, and Ser144.

This sequence belongs to the cyanase family.

The catalysed reaction is cyanate + hydrogencarbonate + 3 H(+) = NH4(+) + 2 CO2. Its function is as follows. Catalyzes the reaction of cyanate with bicarbonate to produce ammonia and carbon dioxide. The polypeptide is Cyanate hydratase (Cryptococcus neoformans var. neoformans serotype D (strain B-3501A) (Filobasidiella neoformans)).